The chain runs to 584 residues: 2-succinyl-5-enolpyruvyl-6-hydroxy-3-cyclohexene-1-carboxylate synthase (584 aa).

This sequence belongs to the TPP enzyme family. MenD subfamily. As to quaternary structure, homodimer. Requires Mg(2+) as cofactor. The cofactor is Mn(2+). Thiamine diphosphate serves as cofactor.

It carries out the reaction isochorismate + 2-oxoglutarate + H(+) = 5-enolpyruvoyl-6-hydroxy-2-succinyl-cyclohex-3-ene-1-carboxylate + CO2. It functions in the pathway quinol/quinone metabolism; 1,4-dihydroxy-2-naphthoate biosynthesis; 1,4-dihydroxy-2-naphthoate from chorismate: step 2/7. It participates in quinol/quinone metabolism; menaquinone biosynthesis. In terms of biological role, catalyzes the thiamine diphosphate-dependent decarboxylation of 2-oxoglutarate and the subsequent addition of the resulting succinic semialdehyde-thiamine pyrophosphate anion to isochorismate to yield 2-succinyl-5-enolpyruvyl-6-hydroxy-3-cyclohexene-1-carboxylate (SEPHCHC). This is 2-succinyl-5-enolpyruvyl-6-hydroxy-3-cyclohexene-1-carboxylate synthase from Bacillus thuringiensis subsp. konkukian (strain 97-27).